Consider the following 318-residue polypeptide: Pseudouridine-5'-phosphate glycosidase 1 (318 aa).

Glu29 functions as the Proton donor in the catalytic mechanism. Substrate contacts are provided by Lys90 and Val110. Asp142 contacts Mn(2+). Ser144–Asp146 serves as a coordination point for substrate. Lys163 functions as the Nucleophile in the catalytic mechanism.

Belongs to the pseudouridine-5'-phosphate glycosidase family. As to quaternary structure, homotrimer. Mn(2+) is required as a cofactor.

The catalysed reaction is D-ribose 5-phosphate + uracil = psi-UMP + H2O. In terms of biological role, catalyzes the reversible cleavage of pseudouridine 5'-phosphate (PsiMP) to ribose 5-phosphate and uracil. Functions biologically in the cleavage direction, as part of a pseudouridine degradation pathway. The sequence is that of Pseudouridine-5'-phosphate glycosidase 1 from Photorhabdus laumondii subsp. laumondii (strain DSM 15139 / CIP 105565 / TT01) (Photorhabdus luminescens subsp. laumondii).